Reading from the N-terminus, the 227-residue chain is Uracil-DNA glycosylase 2 (227 aa).

Aspartate 67 acts as the Proton acceptor in catalysis.

It belongs to the uracil-DNA glycosylase (UDG) superfamily. UNG family.

It is found in the cytoplasm. The enzyme catalyses Hydrolyzes single-stranded DNA or mismatched double-stranded DNA and polynucleotides, releasing free uracil.. Its function is as follows. Excises uracil residues from the DNA which can arise as a result of misincorporation of dUMP residues by DNA polymerase or due to deamination of cytosine. The protein is Uracil-DNA glycosylase 2 (ung2) of Streptomyces coelicolor (strain ATCC BAA-471 / A3(2) / M145).